The following is a 304-amino-acid chain: Calmodulin-lysine N-methyltransferase (304 aa).

Belongs to the class I-like SAM-binding methyltransferase superfamily. CLNMT methyltransferase family. As to quaternary structure, monomer. In terms of tissue distribution, expressed in discreet spatial and tissue-specific patterns including root tips, leaves-tips, floral buds, stamens, hydathodes, stigma, anther, siliques, apical meristems and germinating seeds. Also observed at high levels in the root stele region.

It is found in the cytoplasm. The protein localises to the nucleus. The catalysed reaction is [calmodulin]-L-lysine + S-adenosyl-L-methionine = [calmodulin]-N(6)-methyl-L-lysine + S-adenosyl-L-homocysteine + H(+). Its function is as follows. Catalyzes the trimethylation of calmodulin. Regulates roots development probably by modulating auxin signaling responses. May be involved in gravitropism. Involved in abscisic acid (ABA)-mediated and abiotic stress responses, including salt (NaCl), cold, drought and heat stresses. The protein is Calmodulin-lysine N-methyltransferase of Arabidopsis thaliana (Mouse-ear cress).